Here is a 199-residue protein sequence, read N- to C-terminus: Nucleoid occlusion factor SlmA (199 aa).

Residues 10–71 (RNRREEILQA…SLIEFIEDSL (62 aa)) enclose the HTH tetR-type domain. Positions 34–53 (TTAKLAANVGVSEAALYRHF) form a DNA-binding region, H-T-H motif. Positions 120-140 (NRLQGRINQLFERIEVQIRQV) form a coiled coil.

The protein belongs to the nucleoid occlusion factor SlmA family. Homodimer. Interacts with FtsZ.

It is found in the cytoplasm. It localises to the nucleoid. Functionally, required for nucleoid occlusion (NO) phenomenon, which prevents Z-ring formation and cell division over the nucleoid. Acts as a DNA-associated cell division inhibitor that binds simultaneously chromosomal DNA and FtsZ, and disrupts the assembly of FtsZ polymers. SlmA-DNA-binding sequences (SBS) are dispersed on non-Ter regions of the chromosome, preventing FtsZ polymerization at these regions. In Photorhabdus laumondii subsp. laumondii (strain DSM 15139 / CIP 105565 / TT01) (Photorhabdus luminescens subsp. laumondii), this protein is Nucleoid occlusion factor SlmA.